The primary structure comprises 346 residues: Phosphate acyltransferase (346 aa).

This sequence belongs to the PlsX family. Homodimer. Probably interacts with PlsY.

The protein resides in the cytoplasm. It carries out the reaction a fatty acyl-[ACP] + phosphate = an acyl phosphate + holo-[ACP]. It participates in lipid metabolism; phospholipid metabolism. Its function is as follows. Catalyzes the reversible formation of acyl-phosphate (acyl-PO(4)) from acyl-[acyl-carrier-protein] (acyl-ACP). This enzyme utilizes acyl-ACP as fatty acyl donor, but not acyl-CoA. The sequence is that of Phosphate acyltransferase from Geotalea uraniireducens (strain Rf4) (Geobacter uraniireducens).